The primary structure comprises 148 residues: Small ribosomal subunit protein uS15 (148 aa).

Belongs to the universal ribosomal protein uS15 family.

This chain is Small ribosomal subunit protein uS15 (RPS13), found in Encephalitozoon cuniculi (strain GB-M1) (Microsporidian parasite).